A 257-amino-acid polypeptide reads, in one-letter code: Thiazole synthase (257 aa).

Catalysis depends on lysine 96, which acts as the Schiff-base intermediate with DXP. 1-deoxy-D-xylulose 5-phosphate contacts are provided by residues glycine 157, alanine 184–glycine 185, and asparagine 206–threonine 207.

Belongs to the ThiG family. In terms of assembly, homotetramer. Forms heterodimers with either ThiH or ThiS.

It is found in the cytoplasm. It carries out the reaction [ThiS sulfur-carrier protein]-C-terminal-Gly-aminoethanethioate + 2-iminoacetate + 1-deoxy-D-xylulose 5-phosphate = [ThiS sulfur-carrier protein]-C-terminal Gly-Gly + 2-[(2R,5Z)-2-carboxy-4-methylthiazol-5(2H)-ylidene]ethyl phosphate + 2 H2O + H(+). It participates in cofactor biosynthesis; thiamine diphosphate biosynthesis. In terms of biological role, catalyzes the rearrangement of 1-deoxy-D-xylulose 5-phosphate (DXP) to produce the thiazole phosphate moiety of thiamine. Sulfur is provided by the thiocarboxylate moiety of the carrier protein ThiS. In vitro, sulfur can be provided by H(2)S. The sequence is that of Thiazole synthase from Agrobacterium fabrum (strain C58 / ATCC 33970) (Agrobacterium tumefaciens (strain C58)).